A 119-amino-acid chain; its full sequence is NADH dehydrogenase [ubiquinone] 1 subunit C2 (119 aa).

Residues 56-75 (GLHRQLLYITAFFFAGYYLV) form a helical membrane-spanning segment.

It belongs to the complex I NDUFC2 subunit family. Complex I is composed of 45 different subunits. Interacts with TMEM242.

The protein localises to the mitochondrion inner membrane. Accessory subunit of the mitochondrial membrane respiratory chain NADH dehydrogenase (Complex I), that is believed not to be involved in catalysis but required for the complex assembly. Complex I functions in the transfer of electrons from NADH to the respiratory chain. The immediate electron acceptor for the enzyme is believed to be ubiquinone. This Pan troglodytes (Chimpanzee) protein is NADH dehydrogenase [ubiquinone] 1 subunit C2.